Reading from the N-terminus, the 171-residue chain is ATP synthase subunit b (171 aa).

Residues 26–46 traverse the membrane as a helical segment; that stretch reads INLVLVIALLVYFLKGFLGGI.

Belongs to the ATPase B chain family. F-type ATPases have 2 components, F(1) - the catalytic core - and F(0) - the membrane proton channel. F(1) has five subunits: alpha(3), beta(3), gamma(1), delta(1), epsilon(1). F(0) has four main subunits: a(1), b(1), b'(1) and c(10-14). The alpha and beta chains form an alternating ring which encloses part of the gamma chain. F(1) is attached to F(0) by a central stalk formed by the gamma and epsilon chains, while a peripheral stalk is formed by the delta, b and b' chains.

It localises to the cellular thylakoid membrane. Its function is as follows. F(1)F(0) ATP synthase produces ATP from ADP in the presence of a proton or sodium gradient. F-type ATPases consist of two structural domains, F(1) containing the extramembraneous catalytic core and F(0) containing the membrane proton channel, linked together by a central stalk and a peripheral stalk. During catalysis, ATP synthesis in the catalytic domain of F(1) is coupled via a rotary mechanism of the central stalk subunits to proton translocation. In terms of biological role, component of the F(0) channel, it forms part of the peripheral stalk, linking F(1) to F(0). This Synechococcus sp. (strain RCC307) protein is ATP synthase subunit b.